Reading from the N-terminus, the 513-residue chain is Exoglucanase 1 (513 aa).

A signal peptide spans 1–17 (MYRKLAVISAFLATARA). Gln-18 is subject to Pyrrolidone carboxylic acid. Residues 18 to 453 (QSACTLQSET…GSTGNPSGGN (436 aa)) form a catalytic region. Intrachain disulfides connect Cys-21-Cys-89, Cys-36-Cys-42, Cys-67-Cys-88, Cys-78-Cys-84, Cys-155-Cys-414, Cys-189-Cys-227, Cys-193-Cys-226, Cys-247-Cys-273, Cys-255-Cys-260, and Cys-278-Cys-348. N-linked (GlcNAc) asparagine glycosylation occurs at Asn-62. Glu-229 acts as the Nucleophile in catalysis. Catalysis depends on Glu-234, which acts as the Proton donor/acceptor. N-linked (GlcNAc) asparagine glycosylation is found at Asn-287 and Asn-401. Residues 401–437 (NETSSTPGAVRGSCSTSSGVPAQVESQSPNAKVTFSN) show a composition bias toward polar residues. Residues 401–480 (NETSSTPGAV…TGSSPGPTQS (80 aa)) are disordered. Residues 449-459 (PSGGNPPGGNR) show a composition bias toward gly residues. The segment at 454–477 (PPGGNRGTTTTRRPATTTGSSPGP) is linker. The segment covering 460–478 (GTTTTRRPATTTGSSPGPT) has biased composition (low complexity). An O-linked (Man) threonine glycan is attached at Thr-461. O-linked (Man...) threonine glycosylation is found at Thr-462, Thr-463, and Thr-464. O-linked (Man) threonine glycosylation occurs at Thr-469. O-linked (Man...) threonine glycosylation is found at Thr-470 and Thr-471. O-linked (Man) serine glycans are attached at residues Ser-473 and Ser-474. Residues 477–513 (PTQSHYGQCGGIGYSGPTVCASGTTCQVLNPYYSQCL) enclose the CBM1 domain. An O-linked (Man) threonine glycan is attached at Thr-478. 2 O-linked (Man) serine glycosylation sites follow: Ser-480 and Ser-491. 2 disulfide bridges follow: Cys-485/Cys-502 and Cys-496/Cys-512.

This sequence belongs to the glycosyl hydrolase 7 (cellulase C) family. In terms of processing, N-glycosylated. The catalytic core domain comprises three N-linked glycans which each consist of a single N-acetylglucosamine residue. Post-translationally, O-glycosylated. Within the linker domain, all 8 threonines are variably glycosylated with between at least one, and up to three, mannose residues per site. All serines in this domain are at least partially glycosylated with a single mannose residue. O-glycosylation of the cellulase linker provides protection from proteolysis. Linker glycans also contribute to binding affinity of cellobiohydrolases to cellulose.

It is found in the secreted. The catalysed reaction is Hydrolysis of (1-&gt;4)-beta-D-glucosidic linkages in cellulose and cellotetraose, releasing cellobiose from the non-reducing ends of the chains.. Functionally, exocellobiohydrolases (CBH) that catalyzes the hydrolysis of 1,4-beta-D-glucosidic bonds in cellulose to release the disaccharide cellobiose. The degradation of cellulose involves an interplay between different cellulolytic enzymes. Hydrolysis starts with endoglucanases (EGs), which cut internal beta-1,4-glucosidic bonds in cellulose to reduce the polymerization degree of the substrate and create new chain ends for exocellobiohydrolases (CBHs). The CBHs release the disaccharide cellobiose from the non-reducing end of the cellulose polymer chain. Finally, beta-1,4-glucosidases hydrolyze the cellobiose and other short cello-oligosaccharides into glucose units. In Hypocrea jecorina (Trichoderma reesei), this protein is Exoglucanase 1 (cbh1).